The primary structure comprises 318 residues: Ribonuclease Z (318 aa).

Zn(2+)-binding residues include His62, His64, Asp66, His67, His144, Asp215, and His273. Asp66 serves as the catalytic Proton acceptor.

This sequence belongs to the RNase Z family. In terms of assembly, homodimer. Zn(2+) is required as a cofactor.

It carries out the reaction Endonucleolytic cleavage of RNA, removing extra 3' nucleotides from tRNA precursor, generating 3' termini of tRNAs. A 3'-hydroxy group is left at the tRNA terminus and a 5'-phosphoryl group is left at the trailer molecule.. Its function is as follows. Zinc phosphodiesterase, which displays some tRNA 3'-processing endonuclease activity. Probably involved in tRNA maturation, by removing a 3'-trailer from precursor tRNA. This Prochlorococcus marinus (strain MIT 9313) protein is Ribonuclease Z.